We begin with the raw amino-acid sequence, 450 residues long: Enolase (450 aa).

Gln-173 lines the (2R)-2-phosphoglycerate pocket. Glu-215 (proton donor) is an active-site residue. Mg(2+)-binding residues include Asp-254, Glu-308, and Asp-335. (2R)-2-phosphoglycerate-binding residues include Lys-360, Arg-389, Ser-390, and Lys-411. Lys-360 (proton acceptor) is an active-site residue.

This sequence belongs to the enolase family. Mg(2+) serves as cofactor.

It is found in the cytoplasm. It localises to the secreted. Its subcellular location is the cell surface. It carries out the reaction (2R)-2-phosphoglycerate = phosphoenolpyruvate + H2O. It participates in carbohydrate degradation; glycolysis; pyruvate from D-glyceraldehyde 3-phosphate: step 4/5. Its function is as follows. Catalyzes the reversible conversion of 2-phosphoglycerate (2-PG) into phosphoenolpyruvate (PEP). It is essential for the degradation of carbohydrates via glycolysis. This chain is Enolase, found in Malacoplasma penetrans (strain HF-2) (Mycoplasma penetrans).